The primary structure comprises 245 residues: tRNA (guanine-N(7)-)-methyltransferase (245 aa).

Residues Glu75, Glu100, Asp127, and Asp149 each contribute to the S-adenosyl-L-methionine site. Residue Asp149 is part of the active site. Substrate is bound by residues Lys153, Asp185, and 222–225 (TKFE).

The protein belongs to the class I-like SAM-binding methyltransferase superfamily. TrmB family.

The enzyme catalyses guanosine(46) in tRNA + S-adenosyl-L-methionine = N(7)-methylguanosine(46) in tRNA + S-adenosyl-L-homocysteine. The protein operates within tRNA modification; N(7)-methylguanine-tRNA biosynthesis. Its function is as follows. Catalyzes the formation of N(7)-methylguanine at position 46 (m7G46) in tRNA. The chain is tRNA (guanine-N(7)-)-methyltransferase from Acinetobacter baylyi (strain ATCC 33305 / BD413 / ADP1).